We begin with the raw amino-acid sequence, 282 residues long: ATP synthase gamma chain (282 aa).

This sequence belongs to the ATPase gamma chain family. F-type ATPases have 2 components, CF(1) - the catalytic core - and CF(0) - the membrane proton channel. CF(1) has five subunits: alpha(3), beta(3), gamma(1), delta(1), epsilon(1). CF(0) has three main subunits: a, b and c.

Its subcellular location is the cell membrane. In terms of biological role, produces ATP from ADP in the presence of a proton gradient across the membrane. The gamma chain is believed to be important in regulating ATPase activity and the flow of protons through the CF(0) complex. This Clostridium botulinum (strain Loch Maree / Type A3) protein is ATP synthase gamma chain.